Reading from the N-terminus, the 417-residue chain is Serine hydroxymethyltransferase (417 aa).

(6S)-5,6,7,8-tetrahydrofolate is bound by residues L121 and 125–127 (GHL). The residue at position 229 (K229) is an N6-(pyridoxal phosphate)lysine. Residue 355–357 (SPF) participates in (6S)-5,6,7,8-tetrahydrofolate binding.

It belongs to the SHMT family. In terms of assembly, homodimer. Pyridoxal 5'-phosphate is required as a cofactor.

It localises to the cytoplasm. The catalysed reaction is (6R)-5,10-methylene-5,6,7,8-tetrahydrofolate + glycine + H2O = (6S)-5,6,7,8-tetrahydrofolate + L-serine. Its pathway is one-carbon metabolism; tetrahydrofolate interconversion. It participates in amino-acid biosynthesis; glycine biosynthesis; glycine from L-serine: step 1/1. Functionally, catalyzes the reversible interconversion of serine and glycine with tetrahydrofolate (THF) serving as the one-carbon carrier. This reaction serves as the major source of one-carbon groups required for the biosynthesis of purines, thymidylate, methionine, and other important biomolecules. Also exhibits THF-independent aldolase activity toward beta-hydroxyamino acids, producing glycine and aldehydes, via a retro-aldol mechanism. The protein is Serine hydroxymethyltransferase of Xylella fastidiosa (strain M12).